We begin with the raw amino-acid sequence, 159 residues long: 2-C-methyl-D-erythritol 2,4-cyclodiphosphate synthase (159 aa).

Positions 8 and 10 each coordinate a divalent metal cation. 4-CDP-2-C-methyl-D-erythritol 2-phosphate is bound by residues 8–10 and 34–35; these read DVH and HS. Residue histidine 42 coordinates a divalent metal cation. 4-CDP-2-C-methyl-D-erythritol 2-phosphate contacts are provided by residues 56 to 58, 61 to 65, 100 to 106, 132 to 135, phenylalanine 139, and arginine 142; these read DIG, FPDTD, AQAPKML, and TTTE.

The protein belongs to the IspF family. In terms of assembly, homotrimer. The cofactor is a divalent metal cation.

The catalysed reaction is 4-CDP-2-C-methyl-D-erythritol 2-phosphate = 2-C-methyl-D-erythritol 2,4-cyclic diphosphate + CMP. It functions in the pathway isoprenoid biosynthesis; isopentenyl diphosphate biosynthesis via DXP pathway; isopentenyl diphosphate from 1-deoxy-D-xylulose 5-phosphate: step 4/6. Its function is as follows. Involved in the biosynthesis of isopentenyl diphosphate (IPP) and dimethylallyl diphosphate (DMAPP), two major building blocks of isoprenoid compounds. Catalyzes the conversion of 4-diphosphocytidyl-2-C-methyl-D-erythritol 2-phosphate (CDP-ME2P) to 2-C-methyl-D-erythritol 2,4-cyclodiphosphate (ME-CPP) with a corresponding release of cytidine 5-monophosphate (CMP). In Klebsiella pneumoniae subsp. pneumoniae (strain ATCC 700721 / MGH 78578), this protein is 2-C-methyl-D-erythritol 2,4-cyclodiphosphate synthase.